We begin with the raw amino-acid sequence, 427 residues long: UDP-N-acetylglucosamine 1-carboxyvinyltransferase (427 aa).

22-23 serves as a coordination point for phosphoenolpyruvate; sequence KN. R99 lines the UDP-N-acetyl-alpha-D-glucosamine pocket. C123 acts as the Proton donor in catalysis. The residue at position 123 (C123) is a 2-(S-cysteinyl)pyruvic acid O-phosphothioketal. Residues 128–132, D313, and I335 each bind UDP-N-acetyl-alpha-D-glucosamine; that span reads RPIDL.

The protein belongs to the EPSP synthase family. MurA subfamily.

The protein localises to the cytoplasm. It carries out the reaction phosphoenolpyruvate + UDP-N-acetyl-alpha-D-glucosamine = UDP-N-acetyl-3-O-(1-carboxyvinyl)-alpha-D-glucosamine + phosphate. It functions in the pathway cell wall biogenesis; peptidoglycan biosynthesis. Cell wall formation. Adds enolpyruvyl to UDP-N-acetylglucosamine. This chain is UDP-N-acetylglucosamine 1-carboxyvinyltransferase, found in Novosphingobium aromaticivorans (strain ATCC 700278 / DSM 12444 / CCUG 56034 / CIP 105152 / NBRC 16084 / F199).